The following is a 456-amino-acid chain: Exodeoxyribonuclease 7 large subunit (456 aa).

The protein belongs to the XseA family. In terms of assembly, heterooligomer composed of large and small subunits.

It localises to the cytoplasm. The enzyme catalyses Exonucleolytic cleavage in either 5'- to 3'- or 3'- to 5'-direction to yield nucleoside 5'-phosphates.. Functionally, bidirectionally degrades single-stranded DNA into large acid-insoluble oligonucleotides, which are then degraded further into small acid-soluble oligonucleotides. This chain is Exodeoxyribonuclease 7 large subunit, found in Escherichia coli O157:H7.